A 109-amino-acid polypeptide reads, in one-letter code: MFTEQVLNVIILLQTATVTATAIPASGCNAGDVQCCKSVQKADSAGGAALLGLVGIVLSNLDVFIGGDCSPITAIGVGGTSCSSQAVCCENNSFNGLIALGCVPINLSL.

A signal peptide spans 1–20 (MFTEQVLNVIILLQTATVTA). 4 cysteine pairs are disulfide-bonded: cysteine 28/cysteine 88, cysteine 35/cysteine 82, cysteine 36/cysteine 69, and cysteine 89/cysteine 102. Asparagine 91 and asparagine 106 each carry an N-linked (GlcNAc...) asparagine glycan.

The protein belongs to the fungal hydrophobin family. As to quaternary structure, self-assembles to form functional amyloid fibrils called rodlets. Self-assembly into fibrillar rodlets occurs spontaneously at hydrophobic:hydrophilic interfaces and the rodlets further associate laterally to form amphipathic monolayers.

It is found in the secreted. The protein resides in the cell wall. Functionally, aerial growth, conidiation, and dispersal of filamentous fungi in the environment rely upon a capability of their secreting small amphipathic proteins called hydrophobins (HPBs) with low sequence identity. Class I can self-assemble into an outermost layer of rodlet bundles on aerial cell surfaces, conferring cellular hydrophobicity that supports fungal growth, development and dispersal; whereas Class II form highly ordered films at water-air interfaces through intermolecular interactions but contribute nothing to the rodlet structure. This is Class I hydrophobin 18 from Pleurotus ostreatus (strain PC15) (Oyster mushroom).